We begin with the raw amino-acid sequence, 444 residues long: uncharacterized protein (444 aa).

14 consecutive transmembrane segments (helical) span residues 9 to 29 (LIVSLLLGAILVPINSTMIAV), 42 to 62 (IASITWVVTVYLIVMAVTQPI), 82 to 102 (LFLIASLGCALSPSLLLLIVF), 104 to 126 (ALQAVGGALLTPNSIAIIRHVVS), 136 to 156 (FFGLGAGLGAALGPFIGSILI), 164 to 184 (IFWVNIPFLAIALFTALTMFP), 193 to 213 (APLDIIGSLLLAGSIVSIILL), 217 to 237 (EAPWGYTVYSVLILLFVPLFF), 263 to 283 (LSVLLSNLMMYAVLLIMPLFM), 295 to 315 (GMALSVFSIFMSASNWVGAQL), 324 to 344 (IIFLSFAMMAGANLLFLLLSS), 347 to 367 (SVLFLMLSLILGGLASGVGLT), 387 to 407 (GIFSTFRYFGSIISSALIGLI), and 411 to 431 (HTLFMILFAVSIIGVFVSLGI).

The protein belongs to the major facilitator superfamily. TCR/Tet family.

It is found in the cell membrane. This is an uncharacterized protein from Bacillus subtilis (strain 168).